Here is a 273-residue protein sequence, read N- to C-terminus: Dermonecrotic toxin LhSicTox-alphaIA1ii (273 aa).

Residue histidine 5 is part of the active site. Glutamate 25 and aspartate 27 together coordinate Mg(2+). Catalysis depends on histidine 41, which acts as the Nucleophile. 2 disulfides stabilise this stretch: cysteine 45–cysteine 51 and cysteine 47–cysteine 190. Mg(2+) is bound at residue aspartate 85.

It belongs to the arthropod phospholipase D family. Class II subfamily. Mg(2+) serves as cofactor. In terms of tissue distribution, expressed by the venom gland.

The protein resides in the secreted. It catalyses the reaction an N-(acyl)-sphingosylphosphocholine = an N-(acyl)-sphingosyl-1,3-cyclic phosphate + choline. The enzyme catalyses an N-(acyl)-sphingosylphosphoethanolamine = an N-(acyl)-sphingosyl-1,3-cyclic phosphate + ethanolamine. It carries out the reaction a 1-acyl-sn-glycero-3-phosphocholine = a 1-acyl-sn-glycero-2,3-cyclic phosphate + choline. The catalysed reaction is a 1-acyl-sn-glycero-3-phosphoethanolamine = a 1-acyl-sn-glycero-2,3-cyclic phosphate + ethanolamine. Dermonecrotic toxins cleave the phosphodiester linkage between the phosphate and headgroup of certain phospholipids (sphingolipid and lysolipid substrates), forming an alcohol (often choline) and a cyclic phosphate. This toxin acts on sphingomyelin (SM). It may also act on ceramide phosphoethanolamine (CPE), lysophosphatidylcholine (LPC) and lysophosphatidylethanolamine (LPE), but not on lysophosphatidylserine (LPS), and lysophosphatidylglycerol (LPG). It acts by transphosphatidylation, releasing exclusively cyclic phosphate products as second products. Induces dermonecrosis, hemolysis, increased vascular permeability, edema, inflammatory response, and platelet aggregation. This Loxosceles hirsuta (Recluse spider) protein is Dermonecrotic toxin LhSicTox-alphaIA1ii.